A 69-amino-acid chain; its full sequence is Atypical cationic antimicrobial peptide (69 aa).

The N-terminal stretch at 1 to 22 (MAFLKKSLFLVLFLGLVSLSIC) is a signal peptide. Residues 23–45 (DEEKRENEDEENQEDDEQSEMRR) constitute a propeptide that is removed on maturation. The tract at residues 25–45 (EKRENEDEENQEDDEQSEMRR) is disordered. Residues 30 to 40 (EDEENQEDDEQ) are compositionally biased toward acidic residues.

It belongs to the frog skin active peptide (FSAP) family. As to quaternary structure, monomer and/or weakly self-associated, oligomer, and amyloid-like fibril. Can adopt a monomeric nonamphipathic alpha-helical conformation, possibly with the aid of its cationic N- and C-termini, when bound to anionic membranes. Forms stable and ordered beta-sheet aggregates in aqueous environment or when bound to anionic or zwitterionic phospholipid vesicles. Expressed by the skin glands.

The protein resides in the secreted. Its subcellular location is the target cell membrane. In terms of biological role, atypical cationic antimicrobial peptide with potent activity against Gram-negative and Gram-positive bacteria. Acts by inducing permeabilization of bacterial membrane. In vitro, also shows chemoattractant activity, which is mediated through a G protein-coupled receptor (probably FPR2 coupled to the ERK1/2 MAPK kinase pathway). Has slow-kinetic self-association and amyloid-like properties that modulate its activity. The soluble, weakly self-associated forms act on leukocytes to promote chemotaxis but have low antibacterial activity, the oligomers exhibit potent antimicrobial activity, whereas the amyloid-like fibrils have a very weak antibacterial activity. The membrane composition has a great influence on the peptide behavior. The peptide induces membrane leakage and insertion to a lesser extent in model membranes of the anionic lipid phosphatidylglycerol (PG) than in the model membranes of the zwitterionic lipid phosphatidylcholine (PC) vesicles. It forms more fibrils in PC than in PG. Membrane perturbations are more observed in the presence of PG than in the presence of PC. The peptide shows low hemolytic activity. In Phyllomedusa sauvagei (Sauvage's leaf frog), this protein is Atypical cationic antimicrobial peptide.